Reading from the N-terminus, the 157-residue chain is Protein Smg homolog (157 aa).

The protein belongs to the Smg family.

The protein is Protein Smg homolog of Shewanella denitrificans (strain OS217 / ATCC BAA-1090 / DSM 15013).